We begin with the raw amino-acid sequence, 311 residues long: Fluoride export protein 1 (311 aa).

Residues 1–6 are Cytoplasmic-facing; that stretch reads MLLTQS. The chain crosses the membrane as a helical span at residues 7 to 25; it reads YFCIMSMLGTLARLGLTAL. Residues 26 to 29 are Extracellular-facing; sequence NTYP. A helical transmembrane segment spans residues 30 to 50; that stretch reads GAPFSGLLWVQFVGCVIMGFC. The Cytoplasmic segment spans residues 51-65; that stretch reads QTESVFFPRPKHNAT. Residues 66–86 traverse the membrane as a helical segment; that stretch reads FLLAITTGFCGSLTTFSSWML. The Extracellular portion of the chain corresponds to 87-106; sequence QMFTGMANLDPFERRGRGYS. The chain crosses the membrane as a helical span at residues 107–127; it reads FLSVVSDFMVTMCIAMSSLIW. The Cytoplasmic portion of the chain corresponds to 128 to 154; that stretch reads GKQIGKTTGQWRIGKVAFAWPIPAHTH. Residues 155 to 175 form a helical membrane-spanning segment; that stretch reads IVVRVLLLLLSICFFVGAAFY. The Extracellular portion of the chain corresponds to 176–186; the sequence is TAYTTNVTHRG. N-linked (GlcNAc...) asparagine glycosylation occurs at asparagine 181. Residues 187-207 form a helical membrane-spanning segment; that stretch reads IGFSLIFSPFAALTRLYLARF. The Cytoplasmic segment spans residues 208 to 212; sequence LNSPQ. Residues 213–233 form a helical membrane-spanning segment; it reads YFIPYGTLCANVFATLLLSIM. Residues 234-250 lie on the Extracellular side of the membrane; that stretch reads YMIPQITHCTPVSRSVM. The chain crosses the membrane as a helical span at residues 251 to 268; the sequence is YGIQNGFCAVLSTLSTFS. Residues 269 to 278 lie on the Cytoplasmic side of the membrane; it reads NELHTMPIKR. A helical membrane pass occupies residues 279–299; sequence AYIYCIISVAISFSICVIVDG. Residues 300 to 311 are Extracellular-facing; it reads ATAWGHGYTEKY.

Belongs to the fluoride channel Fluc/FEX (TC 1.A.43) family.

Its subcellular location is the cell membrane. It carries out the reaction fluoride(in) = fluoride(out). Its function is as follows. Fluoride channel required for the rapid expulsion of cytoplasmic fluoride. The polypeptide is Fluoride export protein 1 (fex1) (Schizosaccharomyces pombe (strain 972 / ATCC 24843) (Fission yeast)).